The primary structure comprises 449 residues: Hyaluronidase-4 (449 aa).

A signal peptide spans 1-23; that stretch reads MYHIWIKFLAAWIFLKRFNGVHV. 2 disulfides stabilise this stretch: C47/C340 and C211/C227. 3 N-linked (GlcNAc...) asparagine glycosylation sites follow: N67, N103, and N111. E135 acts as the Proton donor in catalysis. N-linked (GlcNAc...) asparagine glycosylation occurs at N153. N357 carries an N-linked (GlcNAc...) asparagine glycan. 3 disulfide bridges follow: C365–C376, C370–C427, and C429–C438. An N-linked (GlcNAc...) asparagine glycan is attached at N401. An EGF-like domain is found at 427–438; that stretch reads CQCYQGWKGLYC.

It belongs to the glycosyl hydrolase 56 family. In terms of assembly, monomer. Expressed by the venom gland.

Its subcellular location is the secreted. The catalysed reaction is Random hydrolysis of (1-&gt;4)-linkages between N-acetyl-beta-D-glucosamine and D-glucuronate residues in hyaluronate.. Its function is as follows. Snake venom endo-hyaluronidase that degrades hyaluronan to smaller oligosaccharide fragments. In venom, it is not toxic by itself, but increases the diffusion of other venom proteins by degrading the extracellular matrix. In addition, it displays antiedematogenic activity. The polypeptide is Hyaluronidase-4 (Cerastes cerastes (Horned desert viper)).